The following is a 326-amino-acid chain: MTIKLAITPGEPAGVGPDLIITLAQQQWQAMLVVFANAELMRTRANELNIPLTLLPYDASRTDIQPAGSLYIVDIPLQDEVIAGKLNPTNSQYVLDTLHQACQMNLNGEFQALVTGPVHKGVINEAGIPFSGHTEFFAQQSNTPEVVMMLATEGLRVTLATTHIPVTAVSAAITQPKLDNVIRIIDHDLRTKFGIAKPHIFVCGLNPHAGEDGHIGREEIDTIIPALNALRQEGITLTGPLPADTIFNPKYLQQADTVLAMYHDQGLPVLKYKGFSQAVNITLGLPFIRTSVDHGTALDLAATGQADVGSFSIAIKEAISLAKSTQ.

2 residues coordinate substrate: histidine 133 and threonine 134. A divalent metal cation is bound by residues histidine 163, histidine 208, and histidine 263. Lysine 271, asparagine 280, and arginine 289 together coordinate substrate.

This sequence belongs to the PdxA family. In terms of assembly, homodimer. Zn(2+) is required as a cofactor. Mg(2+) serves as cofactor. It depends on Co(2+) as a cofactor.

It localises to the cytoplasm. The catalysed reaction is 4-(phosphooxy)-L-threonine + NAD(+) = 3-amino-2-oxopropyl phosphate + CO2 + NADH. It functions in the pathway cofactor biosynthesis; pyridoxine 5'-phosphate biosynthesis; pyridoxine 5'-phosphate from D-erythrose 4-phosphate: step 4/5. In terms of biological role, catalyzes the NAD(P)-dependent oxidation of 4-(phosphooxy)-L-threonine (HTP) into 2-amino-3-oxo-4-(phosphooxy)butyric acid which spontaneously decarboxylates to form 3-amino-2-oxopropyl phosphate (AHAP). The polypeptide is 4-hydroxythreonine-4-phosphate dehydrogenase (Pseudoalteromonas atlantica (strain T6c / ATCC BAA-1087)).